The primary structure comprises 109 residues: Phosphoribosyl-ATP pyrophosphatase (109 aa).

The protein belongs to the PRA-PH family.

It is found in the cytoplasm. The catalysed reaction is 1-(5-phospho-beta-D-ribosyl)-ATP + H2O = 1-(5-phospho-beta-D-ribosyl)-5'-AMP + diphosphate + H(+). It functions in the pathway amino-acid biosynthesis; L-histidine biosynthesis; L-histidine from 5-phospho-alpha-D-ribose 1-diphosphate: step 2/9. The polypeptide is Phosphoribosyl-ATP pyrophosphatase (Alkalilimnicola ehrlichii (strain ATCC BAA-1101 / DSM 17681 / MLHE-1)).